Reading from the N-terminus, the 956-residue chain is MWATLAKKIFGTANDRRLKGYRPKVAAINALEPEIQKLSDEELAAQTITLRAQLAEGKTLDDLIVPAFATVREAARRVLGQRHFDVQLIGGMVLHEGGIAEMRTGEGKTLVATLATYLNALAGQGVHVVTVNDYLARRDAEWMGQVYRFLGLSTGIIVHGLDDAQRREAYAADITYGTNNEFGFDYLRDNMKYELSHMVQRGHAFAIVDEVDSILIDEARTPLIISGPSDDKSDLYNLVDTLIPKLNDEDFELDEKQRSTNLTEAGNEHIEELLREIGALHDGSLYDAVNVTLVHHVNQALRAHKLFQRDKDYIERNGEIVIIDEFTGRMMPGRRYSEGLHQALEAKEHVQVQPENVTLASITFQNYFRLYKKLAGMTGTAATEADEFAEIYRLEVVSIPTNNPVRRHDEDDEVYRSGEEKLRAITREIEAAGQTLQPMLVGTTSIEKSEQLAAFMLQQGYKQIDFSEPKALQKLYAAARSGKPSKLFAVLNARFHEQEAYIVAEAGVPGAITIATNMAGRGTDIKLGGNVDMRVEQECASLPPGPDRDAKEAEIRAEVDSFRDQAIAAGGLYIIGTERHESRRIDNQLRGRSGRQGDPGRSKFFLSLKDDLMRIFGSDRMESMLLKLGLKEDEAIVHPWINKALEKAQQKVEARNFEMRKNILKYDNVMNDQRKVVFEQRREMMGQDSLEEMIHDMRTGVVDDLVGKFVPHDAYPEAWDIEGLTQGLETALNLALPLADWAKEEGITDEAMHERLQQAAETAYAERAERNGPDLMRYIEKQVVLQVLDHLWREHLVTLDHLRQVIGWRGLAQRDPLNEYKSEAFALFDELITQLRETTTAQLSRVEVAFAPSADQSPFETLAAAAPFDPVPAVPPLAASLALEGPTETGQTAVSFMPQQGVEAFNGRDVLVAAEPTIPTLERNADDPKSWGRVGRNEPCPCGSGKKYKHCHGMIS.

ATP contacts are provided by residues Q87, 105 to 109, and D524; that span reads GEGKT. The Zn(2+) site is built by C940, C942, C951, and H952.

It belongs to the SecA family. Monomer and homodimer. Part of the essential Sec protein translocation apparatus which comprises SecA, SecYEG and auxiliary proteins SecDF-YajC and YidC. Zn(2+) serves as cofactor.

The protein localises to the cell inner membrane. The protein resides in the cytoplasm. The catalysed reaction is ATP + H2O + cellular proteinSide 1 = ADP + phosphate + cellular proteinSide 2.. Part of the Sec protein translocase complex. Interacts with the SecYEG preprotein conducting channel. Has a central role in coupling the hydrolysis of ATP to the transfer of proteins into and across the cell membrane, serving both as a receptor for the preprotein-SecB complex and as an ATP-driven molecular motor driving the stepwise translocation of polypeptide chains across the membrane. The chain is Protein translocase subunit SecA from Beijerinckia indica subsp. indica (strain ATCC 9039 / DSM 1715 / NCIMB 8712).